The following is a 2131-amino-acid chain: Nonribosomal peptide synthetase criC (2131 aa).

The interval 13–407 (FSQQCFQHPD…GRRDRVTKIR (395 aa)) is adenylation 1. Positions 525 to 601 (SGPLTIDQTI…ALVEKNRHET (77 aa)) constitute a Carrier 1 domain. Serine 562 is modified (O-(pantetheine 4'-phosphoryl)serine). Positions 598–627 (RHETENRPDSSAFATRTPEESSMPTQGPVT) are disordered. Residues 625–1018 (PVTPLQKRMV…YMSLLDAFLD (394 aa)) are condensation 1. An adenylation 2 region spans residues 1069-1447 (ASLHPTHIAV…GRKDRQVKVR (379 aa)). Residues 1569-1647 (SSEAHLEKLI…DLITLVAQQQ (79 aa)) enclose the Carrier 2 domain. Serine 1607 is modified (O-(pantetheine 4'-phosphoryl)serine). The interval 1688–2086 (SQSQSTFNVP…EALLLECFRM (399 aa)) is condensation 2.

This sequence belongs to the NRP synthetase family. Pantetheine 4'-phosphate is required as a cofactor.

The catalysed reaction is L-tryptophan + L-alanine + 2 ATP = cyclo(L-tryptophyl-L-alanyl) + 2 ADP + 2 phosphate + 2 H(+). Its pathway is secondary metabolite biosynthesis. The protein operates within alkaloid biosynthesis. In terms of biological role, nonribosomal peptide synthetase; part of the gene cluster that mediates the biosynthesis of echinulin family alkaloid. The pathway begins with the biosynthesis of the cyclic dipeptide cyclo-L-Trp-L-Ala (cyclo-TA) by the NRPS criC via condensation of L-alanine and L-tryptophan. The prenyltransferase criA then catalyzes the first prenylation step, a reverse prenylation reaction at C2, to yield preechinulin. Preechinulin is the substrate of the cytochrome P450 monooxygenase criE that catalyzes the formation of the double bond between C10 and C11 to produce neoechulin A. The unique prenyltransferase criF functions as a competitive enzyme with criE for preechinulin metabolization and uses preechinulin for effective regiospecific prenylations. Preechinulin is prenylated by criF at C5 or C7. C7-prenylation leads to accumulation of tardioxopiperazine B without further modification by criF. In contrast, the C5-prenylated tardioxopiperazine A can be prenylated again by criF, predominantly at C7 to form echinulin or less frequently at C4 to give variecolorin L. CriF also accepts neoechilunin A to produce varlecolorin G (prenylation at C5) or isoechinulin A (prenylation at C7). CriF further converts isoechinulin A into dehydroechinulin. Moreover, a yet unidentified enzyme can also convert neoechilunin A into neoechilunin B by introducing a double bond between positions C14 and C17 and thus provides a further substrate to criF for C5 and C7 prenylation. In Aspergillus cristatus (Chinese Fuzhuan brick tea-fermentation fungus), this protein is Nonribosomal peptide synthetase criC.